The primary structure comprises 88 residues: Small ribosomal subunit protein eS25B (88 aa).

Belongs to the eukaryotic ribosomal protein eS25 family. As to quaternary structure, component of the small ribosomal subunit (SSU). Mature yeast ribosomes consist of a small (40S) and a large (60S) subunit. The 40S small subunit contains 1 molecule of ribosomal RNA (18S rRNA) and at least 33 different proteins. The large 60S subunit contains 3 rRNA molecules (25S, 5.8S and 5S rRNA) and at least 46 different proteins.

It is found in the cytoplasm. Component of the ribosome, a large ribonucleoprotein complex responsible for the synthesis of proteins in the cell. The small ribosomal subunit (SSU) binds messenger RNAs (mRNAs) and translates the encoded message by selecting cognate aminoacyl-transfer RNA (tRNA) molecules. The large subunit (LSU) contains the ribosomal catalytic site termed the peptidyl transferase center (PTC), which catalyzes the formation of peptide bonds, thereby polymerizing the amino acids delivered by tRNAs into a polypeptide chain. The nascent polypeptides leave the ribosome through a tunnel in the LSU and interact with protein factors that function in enzymatic processing, targeting, and the membrane insertion of nascent chains at the exit of the ribosomal tunnel. This is Small ribosomal subunit protein eS25B (rps2501) from Schizosaccharomyces pombe (strain 972 / ATCC 24843) (Fission yeast).